The chain runs to 414 residues: Imidazolonepropionase (414 aa).

Residues His-77 and His-79 each contribute to the Fe(3+) site. Residues His-77 and His-79 each contribute to the Zn(2+) site. Residues Arg-86, Tyr-149, and His-184 each contribute to the 4-imidazolone-5-propanoate site. Tyr-149 provides a ligand contact to N-formimidoyl-L-glutamate. His-249 serves as a coordination point for Fe(3+). Position 249 (His-249) interacts with Zn(2+). Residue Glu-252 participates in 4-imidazolone-5-propanoate binding. Fe(3+) is bound at residue Asp-323. Residue Asp-323 coordinates Zn(2+). Residues Asn-325 and Gly-327 each contribute to the N-formimidoyl-L-glutamate site. Residue Ser-328 participates in 4-imidazolone-5-propanoate binding.

It belongs to the metallo-dependent hydrolases superfamily. HutI family. Zn(2+) is required as a cofactor. The cofactor is Fe(3+).

It localises to the cytoplasm. The enzyme catalyses 4-imidazolone-5-propanoate + H2O = N-formimidoyl-L-glutamate. It functions in the pathway amino-acid degradation; L-histidine degradation into L-glutamate; N-formimidoyl-L-glutamate from L-histidine: step 3/3. Functionally, catalyzes the hydrolytic cleavage of the carbon-nitrogen bond in imidazolone-5-propanoate to yield N-formimidoyl-L-glutamate. It is the third step in the universal histidine degradation pathway. This Phocaeicola vulgatus (strain ATCC 8482 / DSM 1447 / JCM 5826 / CCUG 4940 / NBRC 14291 / NCTC 11154) (Bacteroides vulgatus) protein is Imidazolonepropionase.